The primary structure comprises 457 residues: Argininosuccinate lyase (457 aa).

The protein belongs to the lyase 1 family. Argininosuccinate lyase subfamily.

It is found in the cytoplasm. The enzyme catalyses 2-(N(omega)-L-arginino)succinate = fumarate + L-arginine. It functions in the pathway amino-acid biosynthesis; L-arginine biosynthesis; L-arginine from L-ornithine and carbamoyl phosphate: step 3/3. This chain is Argininosuccinate lyase, found in Shigella flexneri serotype 5b (strain 8401).